We begin with the raw amino-acid sequence, 327 residues long: Leucotoxin LukD (327 aa).

The first 26 residues, 1–26 (MKIEKLGKSSVASSIALLLLSNTVDA), serve as a signal peptide directing secretion.

It belongs to the aerolysin family. As to quaternary structure, toxicity requires sequential binding and synergistic association of a class S and a class F component which form heterooligomeric complexes. LukE (class S) associates with LukD (class F). LukD can also associate with HlgA.

Its subcellular location is the secreted. Its function is as follows. Part of a bi-component leucotoxin that acts by forming pores in the membrane of the target cells. LukE-LukD is as effective as the Panton-Valentine leucocidin (PVL) for inducing dermonecrosis when injected in the rabbit skin, but not hemolytic and poorly leucotoxic on human blood cells compared to other leucotoxins expressed by S.aureus. HlgA-LukD is a Ca(2+) channel inducer. This Staphylococcus aureus protein is Leucotoxin LukD (lukD).